We begin with the raw amino-acid sequence, 151 residues long: Prolamin PPROL 14P (151 aa).

Positions 1 to 19 are cleaved as a signal peptide; that stretch reads MKIIFVFALLAIAACSATA. Q20 carries the post-translational modification Pyrrolidone carboxylic acid.

Belongs to the prolamin family.

It is found in the vacuole. The protein localises to the aleurone grain. Its function is as follows. Seed storage protein; serves as a source of nitrogen, carbon and sulfur for the young developing seedling. The polypeptide is Prolamin PPROL 14P (PROLM20) (Oryza sativa subsp. japonica (Rice)).